The primary structure comprises 249 residues: AA9 family lytic polysaccharide monooxygenase cel61B (249 aa).

An N-terminal signal peptide occupies residues 1 to 19 (MKSCAILAALGCLAGSVLG). His-20 contacts Cu(2+). A glycan (N-linked (GlcNAc...) asparagine) is linked at Asn-25. 2 cysteine pairs are disulfide-bonded: Cys-78–Cys-198 and Cys-120–Cys-124. His-108 contributes to the Cu(2+) binding site. 2 residues coordinate O2: His-184 and Gln-193. Position 195 (Tyr-195) interacts with Cu(2+).

It belongs to the polysaccharide monooxygenase AA9 family. As to quaternary structure, monomer. Cu(2+) serves as cofactor.

The protein localises to the secreted. It carries out the reaction [(1-&gt;4)-beta-D-glucosyl]n+m + reduced acceptor + O2 = 4-dehydro-beta-D-glucosyl-[(1-&gt;4)-beta-D-glucosyl]n-1 + [(1-&gt;4)-beta-D-glucosyl]m + acceptor + H2O.. Functionally, lytic polysaccharide monooxygenase (LPMO) that depolymerizes crystalline and amorphous polysaccharides via the oxidation of scissile alpha- or beta-(1-4)-glycosidic bonds, yielding C1 or C4 oxidation products. Catalysis by LPMOs requires the reduction of the active-site copper from Cu(II) to Cu(I) by a reducing agent and H(2)O(2) or O(2) as a cosubstrate. This is AA9 family lytic polysaccharide monooxygenase cel61B from Hypocrea jecorina (strain QM6a) (Trichoderma reesei).